We begin with the raw amino-acid sequence, 490 residues long: MSRMAEQQLYIHGGYTSATSGRTFETINPANGNVLATVQAAGREDVDRAVKSAQQGQKIWAAMTAMERSRILRRAVDILRERNDELAKLETLDTGKAYSETSTVDIVTGADVLEYYAGLIPALEGSQIPLRETSFVYTRREPLGVVAGIGAWNYPIQIALWKSAPALAAGNAMIFKPSEVTPLTALKLAEIYSEAGLPDGVFNVLPGVGAETGQYLTDHPGIAKVSFTGGVASGKKVMANSAASSLKEVTMELGGKSPLIVFDDADLDLAADITMMANFFSSGQVCTNGTRVFVPTKCKAAFEQKILARVERIRAGDVFDPQTNFGPLVSFPHRDNVLRYIAKGIEEGARVLCGGDVLKGDSFDNGAWVAPTVFTDCSDDMTIVREEIFGPVMSILTYESEDEVIRRANDTDYGLAAGIVTADLNLAHRVIHQLEAGICWINTWGESPAEMPVGGYKHSGIGRENGVMTLQSYTQVKSIQVEMAKFQSIF.

K(+) is bound by residues T26, I27, and D93. 150 to 152 (GAW) contacts NAD(+). The active-site Charge relay system is K162. An NAD(+)-binding site is contributed by 176-179 (KPSE). V180 serves as a coordination point for K(+). An NAD(+)-binding site is contributed by 230–233 (GVAS). L246 is a K(+) binding site. E252 serves as the catalytic Proton acceptor. Residues G254, C286, and E387 each coordinate NAD(+). C286 serves as the catalytic Nucleophile. Position 286 is a cysteine sulfenic acid (-SOH) (C286). K457 and G460 together coordinate K(+). E464 acts as the Charge relay system in catalysis.

It belongs to the aldehyde dehydrogenase family. As to quaternary structure, dimer of dimers. K(+) serves as cofactor.

The enzyme catalyses betaine aldehyde + NAD(+) + H2O = glycine betaine + NADH + 2 H(+). It participates in amine and polyamine biosynthesis; betaine biosynthesis via choline pathway; betaine from betaine aldehyde: step 1/1. Functionally, involved in the biosynthesis of the osmoprotectant glycine betaine. Catalyzes the irreversible oxidation of betaine aldehyde to the corresponding acid. The chain is Betaine aldehyde dehydrogenase from Escherichia coli O45:K1 (strain S88 / ExPEC).